The chain runs to 331 residues: 6-phosphogluconolactonase (331 aa).

At Lys-287 the chain carries N6-acetyllysine.

It belongs to the cycloisomerase 2 family.

The enzyme catalyses 6-phospho-D-glucono-1,5-lactone + H2O = 6-phospho-D-gluconate + H(+). The protein operates within carbohydrate degradation; pentose phosphate pathway; D-ribulose 5-phosphate from D-glucose 6-phosphate (oxidative stage): step 2/3. Its function is as follows. Catalyzes the hydrolysis of 6-phosphogluconolactone to 6-phosphogluconate. The sequence is that of 6-phosphogluconolactonase from Escherichia coli O139:H28 (strain E24377A / ETEC).